The primary structure comprises 488 residues: 5'-3' exonuclease PLD3 (488 aa).

Residues Met1–Trp38 lie on the Cytoplasmic side of the membrane. Residues Val39–Leu59 form a helical; Signal-anchor for type II membrane protein membrane-spanning segment. The Lumenal portion of the chain corresponds to Trp60–Leu488. 2 disulfides stabilise this stretch: Cys77–Cys237 and Cys81–Cys235. N-linked (GlcNAc...) asparagine glycosylation is found at Asn97 and Asn132. Residues Thr194–Ser221 form the PLD phosphodiesterase 1 domain. Residues His199, Lys201, and Asp206 contribute to the active site. His199 acts as the Proton donor in catalysis. Residues His199 and Lys201 each contribute to the phosphate site. Asn216 is a phosphate binding site. N-linked (GlcNAc...) asparagine glycans are attached at residues Asn234, Asn282, and Asn385. Cys364 and Cys485 form a disulfide bridge. The 27-residue stretch at Tyr409–Tyr435 folds into the PLD phosphodiesterase 2 domain. Residue His414 coordinates phosphate. Catalysis depends on His414, which acts as the Nucleophile. Residue Phe436 participates in Mg(2+) binding.

It belongs to the phospholipase D family. Homodimer. Interacts with APP. In terms of processing, N-glycosylated. Proteolytically processed to a soluble form that is stable within endosomes and lysosomes. During transport through the secretory pathway becomes proteolysed by cysteine proteases, thereby releasing a stable soluble lysosomal lumenal polypeptide, whereas the transmembrane-bound fragment is rapidly degraded. Its transport route to lysosomes involves ubiquitination and the ESCRT complex. Post-translationally, ubiquitinated. Ubiquitination mediates sorting into lysosomes.

It localises to the endoplasmic reticulum membrane. The protein resides in the lysosome lumen. Its subcellular location is the early endosome membrane. The protein localises to the late endosome membrane. It is found in the golgi apparatus membrane. It localises to the endosome membrane. It carries out the reaction Exonucleolytic cleavage in the 5'- to 3'-direction to yield nucleoside 3'-phosphates.. The catalysed reaction is a 5'-end 5'-dephospho-ribonucleotidyl-ribonucleotide-RNA + H2O = a ribonucleoside 3'-phosphate + a 5'-end dephospho-ribonucleoside-RNA + H(+). The enzyme catalyses a ribonucleoside 3'-phosphate-2'-3'-cyclophospho-GMP + H2O = a ribonucleoside 3'-phosphate + 2',3'-cyclophospho-GMP + H(+). It catalyses the reaction a 5'-end 5'-dephospho-2'-deoxyribonucleotidyl-2'-deoxyribonucleotide in single-stranded DNA + H2O = a 5'-end dephospho-2'-deoxyribonucleoside in single-stranded DNA + a 2'-deoxyribonucleoside 3'-phosphate + H(+). It carries out the reaction a 5'-end 5'-phospho-2'-deoxyribonucleotide in single-stranded DNA + H2O = a 5'-end 5'-dephospho-2'-deoxyribonucleotide in single-stranded DNA + phosphate. The catalysed reaction is a 3-lyso-sn-glycero-1-phospho-(3'-acyl-1'-sn-glycerol) + a 1-acyl-sn-glycerol = a 3-acyl-sn-glycero-1-phospho-(3'-acyl-1'-sn-glycerol) + glycerol. The enzyme catalyses 3-lyso-sn-glycero-1-phospho-(3'-(9Z-octadecenoyl)-1'-sn-glycerol) + 1-(9Z-octadecenoyl)-sn-glycerol = 3-(9Z-octadecenoyl)-sn-glycero-1-phospho-(3'-(9Z-octadecenoyl)-1'-sn-glycerol) + glycerol. 5'-&gt;3' exonuclease that hydrolyzes the phosphodiester bond of single-stranded DNA (ssDNA) and RNA molecules to form nucleoside 3'-monophosphates and 5'-end 5'-hydroxy deoxyribonucleotide/ribonucleotide fragments. Partially redundant with PLD4, can cleave all four nucleotides displaying higher efficiency for ssDNA and RNA fragments initiated with uridine and guanosine residues and lower efficiency for cytidine-initiated substrates. As a result, it does not always degrade polynucleotides to the single nucleotide level, it can stall at specific sites sparing certain fragments from exonucleolytic degradation. Processes self and pathogenic ssDNA and RNA molecules that reach the endolysosomal compartment via phagocytosis or autophagy and may serve as 'danger' signals for recognition by innate immune receptors such as toll-like receptors (TLRs). Degrades mitochondrial CpG-rich ssDNA fragments to prevent TLR9 activation and autoinflammatory response, but it can cleave viral RNA to generate ligands for TLR7 activation and initiate antiviral immune responses. In plasmacytoid dendritic cells, it cooperates with endonuclease RNASET2 to release 2',3'-cyclic guanosine monophosphate (2',3'-cGMP), a potent stimulatory ligand for TLR7. Produces 2',3'-cGMPs and cytidine-rich RNA fragments that occupy TLR7 ligand-binding pockets and trigger a signaling-competent state. Can exert polynucleotide phosphatase activity toward 5'-phosphorylated ssDNA substrates although at a slow rate. Transphosphatidylase that catalyzes the exchange with R to S stereo-inversion of the glycerol moiety between (S,R)-lysophosphatidylglycerol (LPG) and monoacylglycerol (MAG) substrates to yield (S,S)-bis(monoacylglycero)phosphate (BMP). Can synthesize a variety of (S,S)-BMPs representing the main phospholipid constituent of lysosomal intralumenal vesicle (ILV) membranes that bind acid hydrolases for lipid degradation. Regulates the homeostasis and interorganellar communication of the endolysosomal system with an overall impact on cellular removal of dysfunctional organelles via autophagy as well as proper protein and lipid turnover. May play a role in myotube formation in response to ER stress. The polypeptide is 5'-3' exonuclease PLD3 (Pld3) (Rattus norvegicus (Rat)).